The sequence spans 558 residues: T-complex protein 1 subunit gamma (558 aa).

Cys381 and Cys387 are oxidised to a cystine.

This sequence belongs to the TCP-1 chaperonin family. As to quaternary structure, heterooligomeric complex of about 850 to 900 kDa that forms two stacked rings, 12 to 16 nm in diameter.

The protein localises to the cytoplasm. In terms of biological role, molecular chaperone; assists the folding of proteins upon ATP hydrolysis. Known to play a role, in vitro, in the folding of actin and tubulin. This chain is T-complex protein 1 subunit gamma, found in Thalassiosira weissflogii (Marine diatom).